The sequence spans 144 residues: Large ribosomal subunit protein uL16 (144 aa).

The protein belongs to the universal ribosomal protein uL16 family. Part of the 50S ribosomal subunit.

In terms of biological role, binds 23S rRNA and is also seen to make contacts with the A and possibly P site tRNAs. The chain is Large ribosomal subunit protein uL16 from Bacillus mycoides (strain KBAB4) (Bacillus weihenstephanensis).